The primary structure comprises 154 residues: NADPH-dependent 7-cyano-7-deazaguanine reductase (154 aa).

The segment covering 1–23 (MPNTDVSSLSMLGQQTETAQSPE) has biased composition (polar residues). The interval 1 to 26 (MPNTDVSSLSMLGQQTETAQSPEQAV) is disordered. Cys52 (thioimide intermediate) is an active-site residue. The Proton donor role is filled by Asp59. Residues 74–76 (VES) and 93–94 (HE) each bind substrate.

This sequence belongs to the GTP cyclohydrolase I family. QueF type 1 subfamily.

The protein localises to the cytoplasm. It catalyses the reaction 7-aminomethyl-7-carbaguanine + 2 NADP(+) = 7-cyano-7-deazaguanine + 2 NADPH + 3 H(+). Its pathway is tRNA modification; tRNA-queuosine biosynthesis. In terms of biological role, catalyzes the NADPH-dependent reduction of 7-cyano-7-deazaguanine (preQ0) to 7-aminomethyl-7-deazaguanine (preQ1). The protein is NADPH-dependent 7-cyano-7-deazaguanine reductase of Rhizobium leguminosarum bv. trifolii (strain WSM2304).